The primary structure comprises 930 residues: Isoleucine--tRNA ligase (930 aa).

A 'HIGH' region motif is present at residues 57–67 (PYANGNIHVGH). Residue Glu-554 coordinates L-isoleucyl-5'-AMP. A 'KMSKS' region motif is present at residues 595–599 (KMSKS). An ATP-binding site is contributed by Lys-598. Zn(2+) is bound by residues Cys-888, Cys-891, Cys-908, and Cys-911.

It belongs to the class-I aminoacyl-tRNA synthetase family. IleS type 1 subfamily. In terms of assembly, monomer. It depends on Zn(2+) as a cofactor.

Its subcellular location is the cytoplasm. The enzyme catalyses tRNA(Ile) + L-isoleucine + ATP = L-isoleucyl-tRNA(Ile) + AMP + diphosphate. Functionally, catalyzes the attachment of isoleucine to tRNA(Ile). As IleRS can inadvertently accommodate and process structurally similar amino acids such as valine, to avoid such errors it has two additional distinct tRNA(Ile)-dependent editing activities. One activity is designated as 'pretransfer' editing and involves the hydrolysis of activated Val-AMP. The other activity is designated 'posttransfer' editing and involves deacylation of mischarged Val-tRNA(Ile). The sequence is that of Isoleucine--tRNA ligase from Streptococcus pneumoniae serotype 19F (strain G54).